Consider the following 78-residue polypeptide: Large ribosomal subunit protein bL28 (78 aa).

This sequence belongs to the bacterial ribosomal protein bL28 family.

This Prochlorococcus marinus (strain MIT 9211) protein is Large ribosomal subunit protein bL28.